Reading from the N-terminus, the 211-residue chain is Outer-membrane lipoprotein carrier protein (211 aa).

Residues 1-24 (MNTIKILIGLLGIFLFSLSGIVSA) form the signal peptide.

The protein belongs to the LolA family. As to quaternary structure, monomer.

The protein resides in the periplasm. Functionally, participates in the translocation of lipoproteins from the inner membrane to the outer membrane. Only forms a complex with a lipoprotein if the residue after the N-terminal Cys is not an aspartate (The Asp acts as a targeting signal to indicate that the lipoprotein should stay in the inner membrane). This chain is Outer-membrane lipoprotein carrier protein, found in Coxiella burnetii (strain CbuK_Q154) (Coxiella burnetii (strain Q154)).